Consider the following 159-residue polypeptide: Probable inactive acireductone dioxygenase 1 (159 aa).

Belongs to the acireductone dioxygenase (ARD) family.

It localises to the cytoplasm. It is found in the nucleus. Functionally, probable inactive acireductone dioxygenase. The polypeptide is Probable inactive acireductone dioxygenase 1 (Caenorhabditis elegans).